Reading from the N-terminus, the 625-residue chain is Exonuclease mut-7 homolog (625 aa).

S17 carries the phosphoserine modification. The 3'-5' exonuclease domain maps to 410–602 (LIIVNKADEF…IYNTLIERVS (193 aa)).

It belongs to the mut-7 family. In terms of assembly, interacts with AGO1; the interaction is not RNA dependent. Requires Mg(2+) as cofactor.

Functionally, possesses 3'-5' exoribonuclease activity. Required for 3'-end trimming of AGO1-bound miRNAs, in particular multiple-isoform miRNAs, which represents a critical step in miRNA maturation. In Drosophila melanogaster (Fruit fly), this protein is Exonuclease mut-7 homolog (Nbr).